The sequence spans 652 residues: ATP-binding cassette sub-family G member 5 (652 aa).

Positions 1–25 (MGELPFLSPEGARGPHINRGSLSSL) are disordered. The Cytoplasmic portion of the chain corresponds to 1–384 (MGELPFLSPE…RVTRNLMRNK (384 aa)). The region spanning 39 to 294 (LGVLHVSYSV…FNNCGYPCPE (256 aa)) is the ABC transporter domain. Cys-61 carries S-palmitoyl cysteine lipidation. Residue 87-94 (GSSGSGKT) participates in ATP binding. The helical transmembrane segment at 385-405 (QAVIMRLVQNLIMGLFLIFYL) threads the bilayer. The region spanning 389–646 (MRLVQNLIMG…ILGIVIFKVR (258 aa)) is the ABC transmembrane type-2 domain. Residues 406–422 (LRVQNNTLKGAVQDRVG) are Extracellular-facing. Asn-410 carries N-linked (GlcNAc...) asparagine glycosylation. The chain crosses the membrane as a helical span at residues 423 to 443 (LLYQLVGATPYTGMLNAVNLF). The Cytoplasmic portion of the chain corresponds to 444–468 (PMLRAVSDQESQDGLYHKWQMLLAY). Residues 469–490 (VLHVLPFSVIATVIFSSVCYWT) traverse the membrane as a helical segment. Over 491–501 (LGLYPEVARFG) the chain is Extracellular. The chain crosses the membrane as a helical span at residues 502 to 522 (YFSAALLAPHLIGEFLTLVLL). The Cytoplasmic portion of the chain corresponds to 523-529 (GIVQNPN). Residues 530-550 (IVNSIVALLSISGLLIGSGFI) form a helical membrane-spanning segment. Residues 551-624 (RNIQEMPIPL…PGATSRFTAN (74 aa)) lie on the Extracellular side of the membrane. N-linked (GlcNAc...) asparagine glycosylation is found at Asn-585 and Asn-592. The helical transmembrane segment at 625–645 (FLILYGFIPALVILGIVIFKV) threads the bilayer. At 646 to 652 (RDYLISR) the chain is on the cytoplasmic side.

Belongs to the ABC transporter superfamily. ABCG family. Eye pigment precursor importer (TC 3.A.1.204) subfamily. Heterodimer with ABCG8. It depends on Mg(2+) as a cofactor. Post-translationally, N-glycosylated. N-glycosylation is important for efficient export out of the endoplasmic reticulum. Detected in liver and jejunum. Detected on enterocyte villi (at protein level). Expressed in jejunum, ileum and, at lower level, in the liver.

Its subcellular location is the cell membrane. The protein localises to the apical cell membrane. The catalysed reaction is cholesterol(in) + ATP + H2O = cholesterol(out) + ADP + phosphate + H(+). It catalyses the reaction sitosterol(in) + ATP + H2O = sitosterol(out) + ADP + phosphate + H(+). Its activity is regulated as follows. Cholesterol transport is inhibited by vanadate and by beryllium fluoride. In terms of biological role, ABCG5 and ABCG8 form an obligate heterodimer that mediates Mg(2+)- and ATP-dependent sterol transport across the cell membrane. Plays an essential role in the selective transport of dietary plant sterols and cholesterol in and out of the enterocytes and in the selective sterol excretion by the liver into bile. Required for normal sterol homeostasis. The heterodimer with ABCG8 has ATPase activity. In Mus musculus (Mouse), this protein is ATP-binding cassette sub-family G member 5.